The following is a 364-amino-acid chain: Aminomethyltransferase (364 aa).

It belongs to the GcvT family. The glycine cleavage system is composed of four proteins: P, T, L and H.

The enzyme catalyses N(6)-[(R)-S(8)-aminomethyldihydrolipoyl]-L-lysyl-[protein] + (6S)-5,6,7,8-tetrahydrofolate = N(6)-[(R)-dihydrolipoyl]-L-lysyl-[protein] + (6R)-5,10-methylene-5,6,7,8-tetrahydrofolate + NH4(+). Its function is as follows. The glycine cleavage system catalyzes the degradation of glycine. The chain is Aminomethyltransferase from Proteus mirabilis (strain HI4320).